We begin with the raw amino-acid sequence, 331 residues long: Thiamine thiazole synthase (331 aa).

Substrate is bound by residues S82, 103-104, G111, and V176; that span reads EA. Residue C210 is modified to 2,3-didehydroalanine (Cys). Residues D212, H242, M296, and 306–308 contribute to the substrate site; that span reads RMG.

Belongs to the THI4 family. Homooctamer. Fe cation serves as cofactor. Post-translationally, during the catalytic reaction, a sulfide is transferred from Cys-210 to a reaction intermediate, generating a dehydroalanine residue.

It is found in the cytoplasm. The protein resides in the nucleus. It carries out the reaction [ADP-thiazole synthase]-L-cysteine + glycine + NAD(+) = [ADP-thiazole synthase]-dehydroalanine + ADP-5-ethyl-4-methylthiazole-2-carboxylate + nicotinamide + 3 H2O + 2 H(+). Its function is as follows. Involved in biosynthesis of the thiamine precursor thiazole. Catalyzes the conversion of NAD and glycine to adenosine diphosphate 5-(2-hydroxyethyl)-4-methylthiazole-2-carboxylic acid (ADT), an adenylated thiazole intermediate. The reaction includes an iron-dependent sulfide transfer from a conserved cysteine residue of the protein to a thiazole intermediate. The enzyme can only undergo a single turnover, which suggests it is a suicide enzyme. May have additional roles in adaptation to various stress conditions and in DNA damage tolerance. This is Thiamine thiazole synthase from Eremothecium gossypii (strain ATCC 10895 / CBS 109.51 / FGSC 9923 / NRRL Y-1056) (Yeast).